Here is a 210-residue protein sequence, read N- to C-terminus: Ribosomal RNA large subunit methyltransferase E (210 aa).

5 residues coordinate S-adenosyl-L-methionine: Gly60, Trp62, Asp85, Asp101, and Asp126. The Proton acceptor role is filled by Lys166.

It belongs to the class I-like SAM-binding methyltransferase superfamily. RNA methyltransferase RlmE family.

The protein resides in the cytoplasm. It carries out the reaction uridine(2552) in 23S rRNA + S-adenosyl-L-methionine = 2'-O-methyluridine(2552) in 23S rRNA + S-adenosyl-L-homocysteine + H(+). Functionally, specifically methylates the uridine in position 2552 of 23S rRNA at the 2'-O position of the ribose in the fully assembled 50S ribosomal subunit. The sequence is that of Ribosomal RNA large subunit methyltransferase E from Bordetella pertussis (strain Tohama I / ATCC BAA-589 / NCTC 13251).